A 125-amino-acid polypeptide reads, in one-letter code: Small ribosomal subunit protein uS13 (125 aa).

It belongs to the universal ribosomal protein uS13 family. As to quaternary structure, part of the 30S ribosomal subunit. Forms a loose heterodimer with protein S19. Forms two bridges to the 50S subunit in the 70S ribosome.

Its function is as follows. Located at the top of the head of the 30S subunit, it contacts several helices of the 16S rRNA. In the 70S ribosome it contacts the 23S rRNA (bridge B1a) and protein L5 of the 50S subunit (bridge B1b), connecting the 2 subunits; these bridges are implicated in subunit movement. Contacts the tRNAs in the A and P-sites. This Rickettsia felis (strain ATCC VR-1525 / URRWXCal2) (Rickettsia azadi) protein is Small ribosomal subunit protein uS13.